Here is a 92-residue protein sequence, read N- to C-terminus: MSDLQKGMALLISTFHKYSGKEGDKCTLTKGELKDLLTKELGGAFGNCSDQATLDKIFKDLDTNADGVVDFQEYATMVACTTMLCNKSLSKK.

EF-hand domains lie at 12–47 (ISTF…AFGN) and 49–84 (SDQA…TTML). Residues threonine 27, glutamate 32, aspartate 62, asparagine 64, aspartate 66, and glutamate 73 each coordinate Ca(2+).

It belongs to the S-100 family. Abundant in epithelial cells of olfactory rosette, barbel, skin and gill but not brain or muscle.

Plays an important role in catfish calcium homeostasis. This chain is Ictacalcin, found in Ictalurus punctatus (Channel catfish).